Here is a 502-residue protein sequence, read N- to C-terminus: ATP synthase subunit alpha (502 aa).

169 to 176 is a binding site for ATP; it reads GDRQTGKT.

It belongs to the ATPase alpha/beta chains family. As to quaternary structure, F-type ATPases have 2 components, CF(1) - the catalytic core - and CF(0) - the membrane proton channel. CF(1) has five subunits: alpha(3), beta(3), gamma(1), delta(1), epsilon(1). CF(0) has three main subunits: a(1), b(2) and c(9-12). The alpha and beta chains form an alternating ring which encloses part of the gamma chain. CF(1) is attached to CF(0) by a central stalk formed by the gamma and epsilon chains, while a peripheral stalk is formed by the delta and b chains.

It is found in the cell inner membrane. The catalysed reaction is ATP + H2O + 4 H(+)(in) = ADP + phosphate + 5 H(+)(out). Produces ATP from ADP in the presence of a proton gradient across the membrane. The alpha chain is a regulatory subunit. The sequence is that of ATP synthase subunit alpha from Geotalea daltonii (strain DSM 22248 / JCM 15807 / FRC-32) (Geobacter daltonii).